The chain runs to 367 residues: Chorismate synthase (367 aa).

Arg-48 provides a ligand contact to NADP(+). Residues 125 to 127 (RSS), Gly-284, 299 to 303 (KPTPS), and Arg-325 contribute to the FMN site.

Belongs to the chorismate synthase family. In terms of assembly, homotetramer. Requires FMNH2 as cofactor.

It catalyses the reaction 5-O-(1-carboxyvinyl)-3-phosphoshikimate = chorismate + phosphate. It participates in metabolic intermediate biosynthesis; chorismate biosynthesis; chorismate from D-erythrose 4-phosphate and phosphoenolpyruvate: step 7/7. Catalyzes the anti-1,4-elimination of the C-3 phosphate and the C-6 proR hydrogen from 5-enolpyruvylshikimate-3-phosphate (EPSP) to yield chorismate, which is the branch point compound that serves as the starting substrate for the three terminal pathways of aromatic amino acid biosynthesis. This reaction introduces a second double bond into the aromatic ring system. The sequence is that of Chorismate synthase from Lachnoclostridium phytofermentans (strain ATCC 700394 / DSM 18823 / ISDg) (Clostridium phytofermentans).